The primary structure comprises 212 residues: Thymidylate kinase (212 aa).

10–17 contributes to the ATP binding site; the sequence is GLEGAGKT.

The protein belongs to the thymidylate kinase family.

The catalysed reaction is dTMP + ATP = dTDP + ADP. In terms of biological role, phosphorylation of dTMP to form dTDP in both de novo and salvage pathways of dTTP synthesis. The chain is Thymidylate kinase from Yersinia enterocolitica serotype O:8 / biotype 1B (strain NCTC 13174 / 8081).